The primary structure comprises 342 residues: MTHSLKPWNTFGIDHCAKHIVCAENEQQLLSAWQQATREGLPVMILGEGSNVLFLENYAGTVILNRLKGIEVNETADAWHLHVGAGENWHQLVRYALDNNMPGLENLALIPGCVGSSPIQNIGAYGVELHRVCDYVDCVELETGKRLRLSAAECRFGYRDSIFKNEYQDRVAIVAVGLRLSKQWQPVLTYGDLTRLDPKTVTAQQVFDAVCHMRTTKLPDPKVNGNAGSFFKNPVVAADIAMELLERFPNAPHYPQADGSVKLAAGWLIDQCQLKGVTIGGAAVHRQQALVLINANDATSKDVVALAHHVRQKVGEKFNVWLEPEVRFIGQFGEVNAVESIA.

Residues 13 to 183 enclose the FAD-binding PCMH-type domain; sequence IDHCAKHIVC…VAVGLRLSKQ (171 aa). Arg159 is an active-site residue. Residue Ser229 is the Proton donor of the active site. Residue Glu325 is part of the active site.

The protein belongs to the MurB family. FAD is required as a cofactor.

It is found in the cytoplasm. The catalysed reaction is UDP-N-acetyl-alpha-D-muramate + NADP(+) = UDP-N-acetyl-3-O-(1-carboxyvinyl)-alpha-D-glucosamine + NADPH + H(+). Its pathway is cell wall biogenesis; peptidoglycan biosynthesis. Functionally, cell wall formation. This chain is UDP-N-acetylenolpyruvoylglucosamine reductase, found in Salmonella typhi.